The primary structure comprises 626 residues: Lipid-A-disaccharide synthase (626 aa).

The tract at residues 1-225 (MLPLYLVHVL…YKKSRLPKFH (225 aa)) is unknown. The lipid-A-disaccharide synthase stretch occupies residues 226–626 (SPSCFLSAGE…KEFHPKSSRA (401 aa)).

In the C-terminal section; belongs to the LpxB family.

It catalyses the reaction a lipid X + a UDP-2-N,3-O-bis[(3R)-3-hydroxyacyl]-alpha-D-glucosamine = a lipid A disaccharide + UDP + H(+). It functions in the pathway bacterial outer membrane biogenesis; LPS lipid A biosynthesis. Condensation of UDP-2,3-diacylglucosamine and 2,3-diacylglucosamine-1-phosphate to form lipid A disaccharide, a precursor of lipid A, a phosphorylated glycolipid that anchors the lipopolysaccharide to the outer membrane of the cell. This Chlamydia caviae (strain ATCC VR-813 / DSM 19441 / 03DC25 / GPIC) (Chlamydophila caviae) protein is Lipid-A-disaccharide synthase (lpxB).